The following is a 355-amino-acid chain: Peptide chain release factor 1 (355 aa).

Q231 carries the post-translational modification N5-methylglutamine.

Belongs to the prokaryotic/mitochondrial release factor family. Post-translationally, methylated by PrmC. Methylation increases the termination efficiency of RF1.

It is found in the cytoplasm. In terms of biological role, peptide chain release factor 1 directs the termination of translation in response to the peptide chain termination codons UAG and UAA. The polypeptide is Peptide chain release factor 1 (Wolinella succinogenes (strain ATCC 29543 / DSM 1740 / CCUG 13145 / JCM 31913 / LMG 7466 / NCTC 11488 / FDC 602W) (Vibrio succinogenes)).